The following is a 312-amino-acid chain: Probable cell division protein WhiA (312 aa).

The segment at residues 274–308 (SLKELGTLVPGGPISKSGVNHRLRKLNAYADELRQ) is a DNA-binding region (H-T-H motif).

It belongs to the WhiA family.

Involved in cell division and chromosome segregation. In Limosilactobacillus fermentum (strain NBRC 3956 / LMG 18251) (Lactobacillus fermentum), this protein is Probable cell division protein WhiA.